The primary structure comprises 313 residues: tRNA dimethylallyltransferase (313 aa).

An ATP-binding site is contributed by 11–18 (GPTAGGKT). 13-18 (TAGGKT) contacts substrate. Interaction with substrate tRNA regions lie at residues 36–39 (DSAL), 160–164 (QRIGR), and 243–248 (RCVGYR).

This sequence belongs to the IPP transferase family. In terms of assembly, monomer. It depends on Mg(2+) as a cofactor.

The enzyme catalyses adenosine(37) in tRNA + dimethylallyl diphosphate = N(6)-dimethylallyladenosine(37) in tRNA + diphosphate. In terms of biological role, catalyzes the transfer of a dimethylallyl group onto the adenine at position 37 in tRNAs that read codons beginning with uridine, leading to the formation of N6-(dimethylallyl)adenosine (i(6)A). The polypeptide is tRNA dimethylallyltransferase (Neisseria meningitidis serogroup C / serotype 2a (strain ATCC 700532 / DSM 15464 / FAM18)).